The sequence spans 421 residues: Testin (421 aa).

One can recognise a PET domain in the interval 92 to 199 (MILTNPVAAK…GDVKLPCEMD (108 aa)). Positions 133–164 (EKQPVAGSEGAQYRKKQLAKQLPAHDQDPSKC) are disordered. The span at 155–164 (PAHDQDPSKC) shows a compositional bias: basic and acidic residues. 3 LIM zinc-binding domains span residues 234-297 (YFCY…CDSE), 299-359 (PRCA…NHAV), and 362-421 (QGCH…KMMS).

The protein belongs to the prickle / espinas / testin family. As to quaternary structure, interacts via LIM domain 1 with ZYX. Interacts (via LIM domain 3) with ENAH and VASP. Interacts with ALKBH4, talin, actin, alpha-actinin, GRIP1 and PXN. Interacts (via LIM domain 2) with ACTL7A (via N-terminus). Heterodimer with ACTL7A; the heterodimer interacts with ENAH to form a heterotrimer.

It localises to the cytoplasm. The protein resides in the cell junction. The protein localises to the focal adhesion. Scaffold protein that may play a role in cell adhesion, cell spreading and in the reorganization of the actin cytoskeleton. Plays a role in the regulation of cell proliferation. May act as a tumor suppressor. The polypeptide is Testin (TES) (Plecturocebus moloch (Dusky titi monkey)).